Here is a 338-residue protein sequence, read N- to C-terminus: Ketol-acid reductoisomerase (NADP(+)) (338 aa).

A KARI N-terminal Rossmann domain is found at 1 to 181 (MKVFYDKDAD…GGGRAGIIET (181 aa)). Residues 24 to 27 (YGSQ), Arg47, and Ser52 contribute to the NADP(+) site. Residue His107 is part of the active site. Residue Gly133 coordinates NADP(+). One can recognise a KARI C-terminal knotted domain in the interval 182 to 327 (NFREETETDL…AKLRAMMPWI (146 aa)). The Mg(2+) site is built by Asp190, Glu194, Glu226, and Glu230. Residue Ser251 participates in substrate binding.

The protein belongs to the ketol-acid reductoisomerase family. The cofactor is Mg(2+).

The catalysed reaction is (2R)-2,3-dihydroxy-3-methylbutanoate + NADP(+) = (2S)-2-acetolactate + NADPH + H(+). It catalyses the reaction (2R,3R)-2,3-dihydroxy-3-methylpentanoate + NADP(+) = (S)-2-ethyl-2-hydroxy-3-oxobutanoate + NADPH + H(+). It functions in the pathway amino-acid biosynthesis; L-isoleucine biosynthesis; L-isoleucine from 2-oxobutanoate: step 2/4. Its pathway is amino-acid biosynthesis; L-valine biosynthesis; L-valine from pyruvate: step 2/4. Functionally, involved in the biosynthesis of branched-chain amino acids (BCAA). Catalyzes an alkyl-migration followed by a ketol-acid reduction of (S)-2-acetolactate (S2AL) to yield (R)-2,3-dihydroxy-isovalerate. In the isomerase reaction, S2AL is rearranged via a Mg-dependent methyl migration to produce 3-hydroxy-3-methyl-2-ketobutyrate (HMKB). In the reductase reaction, this 2-ketoacid undergoes a metal-dependent reduction by NADPH to yield (R)-2,3-dihydroxy-isovalerate. In Polynucleobacter necessarius subsp. necessarius (strain STIR1), this protein is Ketol-acid reductoisomerase (NADP(+)).